The primary structure comprises 238 residues: Large ribosomal subunit protein uL3 (238 aa).

Gln157 carries the post-translational modification N5-methylglutamine.

It belongs to the universal ribosomal protein uL3 family. In terms of assembly, part of the 50S ribosomal subunit. Forms a cluster with proteins L14 and L19. Methylated by PrmB.

In terms of biological role, one of the primary rRNA binding proteins, it binds directly near the 3'-end of the 23S rRNA, where it nucleates assembly of the 50S subunit. The sequence is that of Large ribosomal subunit protein uL3 from Ruthia magnifica subsp. Calyptogena magnifica.